The sequence spans 571 residues: Proline--tRNA ligase (571 aa).

This sequence belongs to the class-II aminoacyl-tRNA synthetase family. ProS type 1 subfamily. Homodimer.

The protein resides in the cytoplasm. It catalyses the reaction tRNA(Pro) + L-proline + ATP = L-prolyl-tRNA(Pro) + AMP + diphosphate. In terms of biological role, catalyzes the attachment of proline to tRNA(Pro) in a two-step reaction: proline is first activated by ATP to form Pro-AMP and then transferred to the acceptor end of tRNA(Pro). As ProRS can inadvertently accommodate and process non-cognate amino acids such as alanine and cysteine, to avoid such errors it has two additional distinct editing activities against alanine. One activity is designated as 'pretransfer' editing and involves the tRNA(Pro)-independent hydrolysis of activated Ala-AMP. The other activity is designated 'posttransfer' editing and involves deacylation of mischarged Ala-tRNA(Pro). The misacylated Cys-tRNA(Pro) is not edited by ProRS. This chain is Proline--tRNA ligase, found in Haemophilus ducreyi (strain 35000HP / ATCC 700724).